The following is a 131-amino-acid chain: Large ribosomal subunit protein bL12 (131 aa).

The protein belongs to the bacterial ribosomal protein bL12 family. Homodimer. Part of the ribosomal stalk of the 50S ribosomal subunit. Forms a multimeric L10(L12)X complex, where L10 forms an elongated spine to which 2 to 4 L12 dimers bind in a sequential fashion. Binds GTP-bound translation factors.

In terms of biological role, forms part of the ribosomal stalk which helps the ribosome interact with GTP-bound translation factors. Is thus essential for accurate translation. This Prochlorococcus marinus (strain NATL2A) protein is Large ribosomal subunit protein bL12.